The chain runs to 274 residues: tRNA-cytidine(32) 2-sulfurtransferase (274 aa).

The PP-loop motif signature appears at 40–45 (SGGKDS). [4Fe-4S] cluster contacts are provided by C115, C118, and C206.

It belongs to the TtcA family. Homodimer. Mg(2+) is required as a cofactor. [4Fe-4S] cluster serves as cofactor.

The protein localises to the cytoplasm. The enzyme catalyses cytidine(32) in tRNA + S-sulfanyl-L-cysteinyl-[cysteine desulfurase] + AH2 + ATP = 2-thiocytidine(32) in tRNA + L-cysteinyl-[cysteine desulfurase] + A + AMP + diphosphate + H(+). It functions in the pathway tRNA modification. Catalyzes the ATP-dependent 2-thiolation of cytidine in position 32 of tRNA, to form 2-thiocytidine (s(2)C32). The sulfur atoms are provided by the cysteine/cysteine desulfurase (IscS) system. The chain is tRNA-cytidine(32) 2-sulfurtransferase from Pseudomonas putida (strain ATCC 700007 / DSM 6899 / JCM 31910 / BCRC 17059 / LMG 24140 / F1).